The chain runs to 201 residues: Glycine-rich protein 23 (201 aa).

An N-terminal signal peptide occupies residues 1-24 (MGLISGKVCVFIFVFALVAEFSFG). Repeat copies occupy residues 62–67 (GLGGGG), 68–73 (GLGGGG), 74–79 (GLGGGG), 80–85 (GLGGGG), 86–91 (GLGGGG), 92–97 (GLGGGG), 98–103 (GLGGGS), 104–109 (GLGGGG), 110–115 (GLGGGS), 116–121 (GLGGGG), 122–129 (GLGGGGGG), 130–135 (GLGGGG), 136–143 (GLGGGAGG), 144–151 (GYGGGAGG), 152–157 (GLGGGG), 158–163 (GIGGGG), 164–169 (GFGGGG), 170–175 (GGGFGG), 176–182 (GAGGGFG), 184–189 (GIGGGG), and 190–194 (GLGGG). Residues 62–194 (GLGGGGGLGG…IGGGGGLGGG (133 aa)) are 21 X 6 AA approximate tandem repeats of G-L-G-G-G-G, Gly-rich.

In Arabidopsis thaliana (Mouse-ear cress), this protein is Glycine-rich protein 23.